A 209-amino-acid chain; its full sequence is MVGLVGGGGWRVGDDAAGGGGGGAVAAGAAAAAEAEHMRRLHSHAPGEHQCSSALVKHIKAPVHLVWSLVRSFDQPQRYKPFVSRCVVRGGDLEIGSVREVNVKTGLPATTSTERLELLDDDEHILSVKFVGGDHRLRNYSSIVTVHPESIDGRPGTLVIESFVVDVPDGNTKDETCYFVEAVIKCNLTSLAEVSERLAVQSPTSPLEQ.

The START-like stretch occupies residues histidine 44 to glutamate 196. An intrachain disulfide couples cysteine 51 to cysteine 177. Abscisate contacts are provided by residues lysine 80, alanine 109–glutamate 114, arginine 136–serine 142, and glutamate 161. The Gate loop signature appears at threonine 105–alanine 109. Positions histidine 135–leucine 137 match the Latch loop motif.

This sequence belongs to the PYR/PYL/RCAR abscisic acid intracellular receptor family. As to quaternary structure, monomer. Interacts with PP2C30. Binding to PP2C30 is dependent on the presence of abscisic acid (ABA). Interacts with PP2C51. Binding to PP2C51 is dependent on the presence of ABA. Interacts with PP2C50. Binding to PP2C50 is dependent on the presence of ABA. Interacts with PP2C53. Expressed in leaf sheaths and leaf blades. Expressed at low levels in roots, flowers and seeds.

The protein resides in the nucleus. It localises to the cytoplasm. The protein localises to the cytosol. In terms of biological role, intracellular abscisic acid (ABA) receptor that functions as a positive regulator of ABA signaling pathway. Together with ABI5, PP2C30 and SAPK2, is part of an ABA signaling unit that modulates seed germination and early seedling growth. Acts as a positive regulator of abiotic stress-responsive gene expression. Inhibits the protein phosphatases PP2C06 and PP2C09 when activated by ABA. This is Abscisic acid receptor PYL5 from Oryza sativa subsp. japonica (Rice).